The sequence spans 84 residues: UPF0457 protein BC_3525 (84 aa).

Belongs to the UPF0457 family.

The chain is UPF0457 protein BC_3525 from Bacillus cereus (strain ATCC 14579 / DSM 31 / CCUG 7414 / JCM 2152 / NBRC 15305 / NCIMB 9373 / NCTC 2599 / NRRL B-3711).